Reading from the N-terminus, the 686-residue chain is Glycine--tRNA ligase beta subunit (686 aa).

This sequence belongs to the class-II aminoacyl-tRNA synthetase family. In terms of assembly, tetramer of two alpha and two beta subunits.

The protein resides in the cytoplasm. The enzyme catalyses tRNA(Gly) + glycine + ATP = glycyl-tRNA(Gly) + AMP + diphosphate. The protein is Glycine--tRNA ligase beta subunit of Halothermothrix orenii (strain H 168 / OCM 544 / DSM 9562).